A 629-amino-acid polypeptide reads, in one-letter code: Probable potassium transport system protein Kup 3 (629 aa).

Helical transmembrane passes span 20–40 (LSLS…LYTF), 54–74 (VTTI…IASV), 106–126 (PFII…GTIT), 143–163 (PSLK…LFAI), 171–191 (IGKA…ILGA), 212–232 (FLFS…LCVT), 253–273 (WFGL…ALVL), 291–311 (FLLP…QAII), 343–363 (IYIG…IIGF), 372–392 (AYGI…FIAL), 400–420 (IIKS…FFAA), and 425–445 (FING…MMYI).

The protein belongs to the HAK/KUP transporter (TC 2.A.72) family.

The protein resides in the cell inner membrane. The catalysed reaction is K(+)(in) + H(+)(in) = K(+)(out) + H(+)(out). Its function is as follows. Transport of potassium into the cell. Likely operates as a K(+):H(+) symporter. In Legionella pneumophila (strain Corby), this protein is Probable potassium transport system protein Kup 3.